Consider the following 71-residue polypeptide: DNA-directed RNA polymerase subunit 10-like protein (71 aa).

Cysteine 7, cysteine 10, cysteine 44, and cysteine 45 together coordinate Zn(2+).

Belongs to the archaeal Rpo10/eukaryotic RPB10 RNA polymerase subunit family. Interacts with IYO.

Its subcellular location is the nucleus. In Arabidopsis thaliana (Mouse-ear cress), this protein is DNA-directed RNA polymerase subunit 10-like protein.